The chain runs to 1434 residues: Nitric oxide synthase 1 (1434 aa).

An interaction with NOSIP region spans residues 1–205; the sequence is MEDHMFGVQQ…LQGRGENNEL (205 aa). The PDZ domain maps to 17 to 99; the sequence is SVRLFKRKVG…ETHVVLILRG (83 aa). Disordered regions lie at residues 112 to 192 and 276 to 302; these read TGDG…KKAT and NNPYSEKEQPPTSGKQSPTKNGSPSKC. Residues 163 to 245 are interaction with DYNLL1/PIN; that stretch reads YDDGQEAGSL…MGIQVDRDLD (83 aa). The span at 285–299 shows a compositional bias: polar residues; it reads PPTSGKQSPTKNGSP. Residue Ser339 coordinates (6R)-L-erythro-5,6,7,8-tetrahydrobiopterin. Residue Cys420 participates in heme b binding. The L-arginine site is built by Gln483, Trp592, Tyr593, and Glu597. 3 residues coordinate (6R)-L-erythro-5,6,7,8-tetrahydrobiopterin: Val682, Trp683, and Phe696. Tyr711 serves as a coordination point for heme b. Residues 730 to 750 form a calmodulin-binding region; it reads KRRAIGFKKLAEAVKFSAKLM. Positions 760–940 constitute a Flavodoxin-like domain; it reads ATILYATETG…AFRTWAKKVF (181 aa). 8 residues coordinate FMN: Thr766, Glu767, Thr768, Lys770, Ser771, Ser812, Thr813, and Gly817. 3 positions are modified to phosphoserine: Ser852, Ser862, and Ser863. Residues Ser891, His896, Cys898, Glu924, and Gln928 each coordinate FMN. The region spanning 995 to 1242 is the FAD-binding FR-type domain; sequence KRVSAARLLS…VRGAPSFHLP (248 aa). Arg1015 lines the NADP(+) pocket. Positions 1037, 1178, 1179, 1180, 1181, 1196, and 1198 each coordinate FAD. Ser1201 contributes to the NADP(+) binding site. 4 residues coordinate FAD: Tyr1202, Val1215, Cys1216, and Ser1217. NADP(+)-binding residues include Thr1256, Arg1289, Ser1318, Arg1319, Lys1325, Tyr1327, Gln1329, Asp1362, Thr1403, and Arg1405.

Belongs to the NOS family. As to quaternary structure, homodimer. Interacts with DLG4; the interaction possibly being prevented by the association between NOS1 and CAPON. Forms a ternary complex with CAPON and RASD1. Forms a ternary complex with CAPON and SYN1. Interacts with ZDHHC23. Interacts with NOSIP; which may impair its synaptic location. Interacts with HTR4. Interacts with SLC6A4. Interacts with VAC14. Interacts (via N-terminal domain) with DLG4 (via N-terminal tandem pair of PDZ domains). Interacts with SLC6A4. Forms a complex with ASL, ASS1 and SLC7A1; the complex regulates cell-autonomous L-arginine synthesis and citrulline recycling while channeling extracellular L-arginine to nitric oxide synthesis pathway. Interacts with DMD; localizes NOS1 to sarcolemma in muscle cells. Interacts with DYNLL1; inhibits the nitric oxide synthase activity. The cofactor is heme b. FAD is required as a cofactor. FMN serves as cofactor. It depends on (6R)-L-erythro-5,6,7,8-tetrahydrobiopterin as a cofactor. Post-translationally, ubiquitinated; mediated by STUB1/CHIP in the presence of Hsp70 and Hsp40 (in vitro). Isoform 1 is ubiquitously expressed: detected in skeletal muscle and brain, also in testis, lung and kidney, and at low levels in heart, adrenal gland and retina. Not detected in the platelets. Isoform 3 is expressed only in testis. Isoform 4 is detected in testis, skeletal muscle, lung, and kidney, at low levels in the brain, but not in the heart and adrenal gland.

The protein localises to the cell membrane. Its subcellular location is the sarcolemma. The protein resides in the cell projection. It is found in the dendritic spine. The catalysed reaction is 2 L-arginine + 3 NADPH + 4 O2 + H(+) = 2 L-citrulline + 2 nitric oxide + 3 NADP(+) + 4 H2O. With respect to regulation, stimulated by calcium/calmodulin. Inhibited by DYNLL1 that prevents the dimerization of the protein. Inhibited by NOSIP. Its function is as follows. Produces nitric oxide (NO) which is a messenger molecule with diverse functions throughout the body. In the brain and peripheral nervous system, NO displays many properties of a neurotransmitter. Probably has nitrosylase activity and mediates cysteine S-nitrosylation of cytoplasmic target proteins such SRR. This is Nitric oxide synthase 1 from Homo sapiens (Human).